A 237-amino-acid polypeptide reads, in one-letter code: BTB/POZ domain-containing protein KCTD6 (237 aa).

Residues 1-104 are interaction with ANK1 isoform Mu7; the sequence is MDNGDWGYMM…FYQIEPLIQC (104 aa). The tract at residues 10–110 is interaction with CUL3; sequence MSDPVTLNVG…LIQCLNDPRP (101 aa). The BTB domain occupies 12–81; it reads DPVTLNVGGH…LRTSELTLPL (70 aa). Positions 113-187 are interaction with USP21; it reads PMDTFEEVVE…TFGPCDYHQE (75 aa).

In terms of assembly, homopentamer. Interacts with KCTD11; KCTD6 and KCTD11 may associate in heteropentameric assemblies. Interacts (via BTB domain) with CUL3; initially a 4:4 stoichiometry has been reported, however, electron microscopy revealed pentameric states with a five-pointed pinwheel shape. The interaction with CUL3 is indicative for a participation in a BCR (BTB-CUL3-RBX1) E3 ubiquitin-protein ligase complex. Interacts with HDAC1; probably indirect as the interaction requires the presence of KCTD11. Interacts with USP21 (preferentially catalytic inactive form). Interacts with ANK1 isoform Mu7; detected in striated muscle. Interacts with USP11. In terms of tissue distribution, highly expressed in cerebellum and brain.

It is found in the cytoplasm. Its subcellular location is the myofibril. The protein resides in the sarcomere. It localises to the m line. Its pathway is protein modification; protein ubiquitination. Its function is as follows. Probable substrate-specific adapter of a BCR (BTB-CUL3-RBX1) E3 ubiquitin-protein ligase complex mediating the ubiquitination and subsequent proteasomal degradation of target proteins. Promotes the ubiquitination of HDAC1; the function seems to depend on KCTD11:KCTD6 oligomerization. Can function as antagonist of the Hedgehog pathway by affecting the nuclear transfer of transcription factor GLI1; the function probably occurs via HDAC1 down-regulation, keeping GLI1 acetylated and inactive. Inhibits cell growth and tumorigenicity of medulloblastoma (MDB). Involved in regulating protein levels of ANK1 isoform Mu7 probably implicating CUL3-dependent proteasomal degradation. In Mus musculus (Mouse), this protein is BTB/POZ domain-containing protein KCTD6 (Kctd6).